Consider the following 415-residue polypeptide: Gamma-glutamyl phosphate reductase (415 aa).

It belongs to the gamma-glutamyl phosphate reductase family.

The protein resides in the cytoplasm. The enzyme catalyses L-glutamate 5-semialdehyde + phosphate + NADP(+) = L-glutamyl 5-phosphate + NADPH + H(+). The protein operates within amino-acid biosynthesis; L-proline biosynthesis; L-glutamate 5-semialdehyde from L-glutamate: step 2/2. Catalyzes the NADPH-dependent reduction of L-glutamate 5-phosphate into L-glutamate 5-semialdehyde and phosphate. The product spontaneously undergoes cyclization to form 1-pyrroline-5-carboxylate. The chain is Gamma-glutamyl phosphate reductase from Oceanobacillus iheyensis (strain DSM 14371 / CIP 107618 / JCM 11309 / KCTC 3954 / HTE831).